We begin with the raw amino-acid sequence, 852 residues long: Bifunctional isopimaradiene synthase, chloroplastic (852 aa).

A chloroplast-targeting transit peptide spans 1 to 53 (HHLTANTQSIPHFSTTLNAGSSARKRRSLYLRWGKGSNKIIACVGEGATSVPY). Substrate is bound at residue lysine 252. Mg(2+) contacts are provided by aspartate 385 and aspartate 387. Residues 385 to 388 (DIDD) carry the DXDD motif motif. Position 472 (lysine 472) interacts with substrate. 5 residues coordinate Mg(2+): aspartate 604, aspartate 608, asparagine 748, threonine 752, and glutamate 756. Positions 604–608 (DDLYD) match the DDXXD motif motif.

This sequence belongs to the terpene synthase family. Tpsd subfamily. Requires Mg(2+) as cofactor.

Its subcellular location is the plastid. It is found in the chloroplast. The catalysed reaction is (2E,6E,10E)-geranylgeranyl diphosphate = (+)-copalyl diphosphate. The enzyme catalyses (+)-copalyl diphosphate = isopimara-7,15-diene + diphosphate. It functions in the pathway terpene metabolism; oleoresin biosynthesis. Involved in defensive oleoresin formation in conifers in response to insect attack or other injury. Involved in diterpene (C20) olefins biosynthesis. Bifunctional enzyme that catalyzes two sequential cyclizations of geranylgeranyl diphosphate (GGPP) to isopimara-7,15-diene. The polypeptide is Bifunctional isopimaradiene synthase, chloroplastic (TPS-ISO) (Abies balsamea (Balsam fir)).